An 80-amino-acid polypeptide reads, in one-letter code: Acyl carrier protein (80 aa).

Positions M1 to Q79 constitute a Carrier domain. At S39 the chain carries O-(pantetheine 4'-phosphoryl)serine.

Belongs to the acyl carrier protein (ACP) family. 4'-phosphopantetheine is transferred from CoA to a specific serine of apo-ACP by AcpS. This modification is essential for activity because fatty acids are bound in thioester linkage to the sulfhydryl of the prosthetic group.

It localises to the cytoplasm. It functions in the pathway lipid metabolism; fatty acid biosynthesis. In terms of biological role, carrier of the growing fatty acid chain in fatty acid biosynthesis. The polypeptide is Acyl carrier protein (Lactobacillus johnsonii (strain CNCM I-12250 / La1 / NCC 533)).